A 99-amino-acid polypeptide reads, in one-letter code: PqqA binding protein (99 aa).

This sequence belongs to the PqqD family. As to quaternary structure, monomer. Interacts with PqqE.

It functions in the pathway cofactor biosynthesis; pyrroloquinoline quinone biosynthesis. Functionally, functions as a PqqA binding protein and presents PqqA to PqqE, in the pyrroloquinoline quinone (PQQ) biosynthetic pathway. The protein is PqqA binding protein of Acinetobacter baylyi (strain ATCC 33305 / BD413 / ADP1).